Consider the following 402-residue polypeptide: 4-hydroxy-3-methylbut-2-enyl diphosphate reductase (402 aa).

C66 is a binding site for [4Fe-4S] cluster. H96 contacts (2E)-4-hydroxy-3-methylbut-2-enyl diphosphate. Dimethylallyl diphosphate is bound at residue H96. H96 is an isopentenyl diphosphate binding site. A [4Fe-4S] cluster-binding site is contributed by C157. H185 is a binding site for (2E)-4-hydroxy-3-methylbut-2-enyl diphosphate. Residue H185 coordinates dimethylallyl diphosphate. H185 contributes to the isopentenyl diphosphate binding site. The active-site Proton donor is the E187. T250 contributes to the (2E)-4-hydroxy-3-methylbut-2-enyl diphosphate binding site. C288 provides a ligand contact to [4Fe-4S] cluster. (2E)-4-hydroxy-3-methylbut-2-enyl diphosphate-binding residues include S317, S318, N319, and S379. Residues S317, S318, N319, and S379 each coordinate dimethylallyl diphosphate. Isopentenyl diphosphate contacts are provided by S317, S318, N319, and S379.

It belongs to the IspH family. It depends on [4Fe-4S] cluster as a cofactor.

The enzyme catalyses isopentenyl diphosphate + 2 oxidized [2Fe-2S]-[ferredoxin] + H2O = (2E)-4-hydroxy-3-methylbut-2-enyl diphosphate + 2 reduced [2Fe-2S]-[ferredoxin] + 2 H(+). The catalysed reaction is dimethylallyl diphosphate + 2 oxidized [2Fe-2S]-[ferredoxin] + H2O = (2E)-4-hydroxy-3-methylbut-2-enyl diphosphate + 2 reduced [2Fe-2S]-[ferredoxin] + 2 H(+). It participates in isoprenoid biosynthesis; dimethylallyl diphosphate biosynthesis; dimethylallyl diphosphate from (2E)-4-hydroxy-3-methylbutenyl diphosphate: step 1/1. It functions in the pathway isoprenoid biosynthesis; isopentenyl diphosphate biosynthesis via DXP pathway; isopentenyl diphosphate from 1-deoxy-D-xylulose 5-phosphate: step 6/6. Functionally, catalyzes the conversion of 1-hydroxy-2-methyl-2-(E)-butenyl 4-diphosphate (HMBPP) into a mixture of isopentenyl diphosphate (IPP) and dimethylallyl diphosphate (DMAPP). Acts in the terminal step of the DOXP/MEP pathway for isoprenoid precursor biosynthesis. This is 4-hydroxy-3-methylbut-2-enyl diphosphate reductase from Thermosynechococcus vestitus (strain NIES-2133 / IAM M-273 / BP-1).